The chain runs to 216 residues: Small ribosomal subunit protein uS5 (216 aa).

The S5 DRBM domain maps to 51 to 114 (LEEEVIDVNL…DDAKFNIIKV (64 aa)).

It belongs to the universal ribosomal protein uS5 family. In terms of assembly, part of the 30S ribosomal subunit. Contacts protein S4.

Its function is as follows. With S4 and S12 plays an important role in translational accuracy. The sequence is that of Small ribosomal subunit protein uS5 from Methanothermobacter thermautotrophicus (strain ATCC 29096 / DSM 1053 / JCM 10044 / NBRC 100330 / Delta H) (Methanobacterium thermoautotrophicum).